The chain runs to 473 residues: Photosystem II CP43 reaction center protein (473 aa).

Residues 1–14 constitute a propeptide that is removed on maturation; the sequence is MKILYSLRRFYHVE. Threonine 15 is modified (N-acetylthreonine). Threonine 15 is subject to Phosphothreonine. Transmembrane regions (helical) follow at residues 69-93, 134-155, 178-200, 255-275, and 291-312; these read LFEVAHFVPEKPMYEQGLILLPHLA, LLGPETLEESFPFFGYVWKDRN, KALYFGGVYDTWAPGGGDVRKIT, KPFAWARRAFVWSGEAYLSYS, and WFNNTAYPSEFYGPTGPEASQA. Glutamate 367 provides a ligand contact to [CaMn4O5] cluster. The helical transmembrane segment at 447–471 threads the bilayer; the sequence is RARAAAAGFEKGIDRDLEPVLYMTP.

It belongs to the PsbB/PsbC family. PsbC subfamily. PSII is composed of 1 copy each of membrane proteins PsbA, PsbB, PsbC, PsbD, PsbE, PsbF, PsbH, PsbI, PsbJ, PsbK, PsbL, PsbM, PsbT, PsbX, PsbY, PsbZ, Psb30/Ycf12, at least 3 peripheral proteins of the oxygen-evolving complex and a large number of cofactors. It forms dimeric complexes. It depends on Binds multiple chlorophylls and provides some of the ligands for the Ca-4Mn-5O cluster of the oxygen-evolving complex. It may also provide a ligand for a Cl- that is required for oxygen evolution. PSII binds additional chlorophylls, carotenoids and specific lipids. as a cofactor.

The protein resides in the plastid. It is found in the chloroplast thylakoid membrane. In terms of biological role, one of the components of the core complex of photosystem II (PSII). It binds chlorophyll and helps catalyze the primary light-induced photochemical processes of PSII. PSII is a light-driven water:plastoquinone oxidoreductase, using light energy to abstract electrons from H(2)O, generating O(2) and a proton gradient subsequently used for ATP formation. This chain is Photosystem II CP43 reaction center protein, found in Sorghum bicolor (Sorghum).